The following is a 503-amino-acid chain: MTLVDWFLDTIALLLGLLHIWIARHFQHWEEKGVHHVAPQPLVGSMLRLLTFSVSPAVFIQGVHEAAGSHPYIGFYIFGRPALLVRDPSLLQHILVKDFSNFTDRLTSSNKHKDPVGAANLFCIKGNRWRQIRACITHTFSTARLKIMFSRVLNSASVTRDYILERGNQPINVKDLFVRTSLDSMCSTLFGIESSTLYNSEAQFLHYGHKMMRWTPYRALEALAHFFSPELLNVFDTRLFECESTEFLINAFSEAITEREKTGLYCSDLVDSLIQLKKQLIDVSEHEVLGQAMLFFAAGFETTSSAMAFAMYELALHPEIQDRLRTEIQEVTACHGGQVTYEGVKKMSYLDMVVSEVLRKYPPMSFIDRVCLHDYHIPGTDVVIEKGTPIFVSLLGLHRDSIFYPDPEDFNPERFNKEKKSGVHPFSYIPFGDGPRNCIGLRLGLMSVKLVIIMLLQSLRVETHESTPVPLQLSPYVLFLKNLGRLPLMFVPIGEDNVETSLA.

Residue Cys438 coordinates heme.

The protein belongs to the cytochrome P450 family. Requires heme as cofactor. In terms of tissue distribution, detected only in testes and accessory glands of male adults.

It localises to the endoplasmic reticulum membrane. Its subcellular location is the microsome membrane. The sequence is that of Cytochrome P450 6l1 (CYP6L1) from Blattella germanica (German cockroach).